The chain runs to 253 residues: Phosphoglycerate mutase 2 (253 aa).

Residue T3 is modified to Phosphothreonine. Residues 10-17 (RHGESSWN), 23-24 (CG), R62, 89-92 (ERHY), K100, and 116-117 (RR) each bind substrate. H11 (tele-phosphohistidine intermediate) is an active-site residue. Phosphoserine occurs at positions 14 and 15. The Proton donor/acceptor role is filled by E89. Phosphoserine is present on S118. The residue at position 121 (T121) is a Phosphothreonine. Residues Y132 and Y133 each carry the phosphotyrosine modification. S135 carries the post-translational modification Phosphoserine. The residue at position 152 (T152) is a Phosphothreonine. 187–188 (GN) is a substrate binding site.

Belongs to the phosphoglycerate mutase family. BPG-dependent PGAM subfamily. As to quaternary structure, homodimer. Interacts with ENO1.

The catalysed reaction is (2R)-2-phosphoglycerate = (2R)-3-phosphoglycerate. The enzyme catalyses (2R)-3-phospho-glyceroyl phosphate = (2R)-2,3-bisphosphoglycerate + H(+). Interconversion of 3- and 2-phosphoglycerate with 2,3-bisphosphoglycerate as the primer of the reaction. Can also catalyze the reaction of EC 5.4.2.4 (synthase), but with a reduced activity. This chain is Phosphoglycerate mutase 2 (Pgam2), found in Rattus norvegicus (Rat).